The following is a 147-amino-acid chain: MMVFRLLKNYSLYFAWLTALIATLGSLYLSLVRHIPVCDLCWYQRVCIYPLTILLGIAAYRTDRGVVKYALPLVVLGFLFSIYQYLQQMIPGFAPINLCGSTSPHCSEIHWEIFGFITLPFLGMLATLIMSFFLIMAFYSLDKRLAN.

A helical membrane pass occupies residues 9–28 (NYSLYFAWLTALIATLGSLY). Cys38 and Cys41 are oxidised to a cystine. 2 helical membrane passes run 43-62 (YQRV…AYRT) and 69-86 (YALP…YQYL). A disulfide bond links Cys99 and Cys106. A helical membrane pass occupies residues 115–138 (GFITLPFLGMLATLIMSFFLIMAF).

It belongs to the DsbB family. BdbC subfamily.

Its subcellular location is the cell inner membrane. In terms of biological role, required for disulfide bond formation in some proteins. This chain is Probable disulfide formation protein, found in Coxiella burnetii (strain CbuK_Q154) (Coxiella burnetii (strain Q154)).